The sequence spans 111 residues: Nucleoid-associated protein Cphamn1_1179 (111 aa).

It belongs to the YbaB/EbfC family. As to quaternary structure, homodimer.

The protein resides in the cytoplasm. It is found in the nucleoid. In terms of biological role, binds to DNA and alters its conformation. May be involved in regulation of gene expression, nucleoid organization and DNA protection. The chain is Nucleoid-associated protein Cphamn1_1179 from Chlorobium phaeobacteroides (strain BS1).